A 435-amino-acid polypeptide reads, in one-letter code: Serine/threonine-protein kinase 40 (435 aa).

Residues 1 to 10 (MKRRASDRGA) show a composition bias toward basic and acidic residues. The tract at residues 1–25 (MKRRASDRGAGETSARAKALGSGIS) is disordered. The 298-residue stretch at 35 to 332 (FILGPRLGNS…DVLEALSAII (298 aa)) folds into the Protein kinase domain. Residues 41-49 (LGNSPVPSI) and lysine 66 each bind ATP. The Proton acceptor role is filled by aspartate 197.

Belongs to the protein kinase superfamily. CAMK Ser/Thr protein kinase family.

Its subcellular location is the nucleus. It is found in the cytoplasm. It catalyses the reaction L-seryl-[protein] + ATP = O-phospho-L-seryl-[protein] + ADP + H(+). The catalysed reaction is L-threonyl-[protein] + ATP = O-phospho-L-threonyl-[protein] + ADP + H(+). Functionally, may be a negative regulator of NF-kappa-B and p53-mediated gene transcription. This is Serine/threonine-protein kinase 40 (STK40) from Pongo abelii (Sumatran orangutan).